The primary structure comprises 616 residues: D-glucuronyl C5-epimerase (616 aa).

At 1–12 (MKCLRWRSNRHR) the chain is on the cytoplasmic side. A helical; Signal-anchor for type II membrane protein membrane pass occupies residues 13-29 (IYLLVACGALFLLNRHL). Residues 30–616 (TQEESRIDEE…YAYGKRAKHN (587 aa)) are Extracellular-facing. Substrate-binding positions include Y136, 141-143 (RDR), and Q169. Residues N188, N232, N267, and N471 are each glycosylated (N-linked (GlcNAc...) asparagine). Residues Y504, R562, and 574–580 (RWDYHAV) each bind substrate.

This sequence belongs to the D-glucuronyl C5-epimerase family. Homodimer. Expression in comma stage embryos is strong in the hypodermis and intestine and weaker in the head region. In late embryos, larval, and adult stages, expressed primarily in hypodermis and intestine.

It localises to the cell membrane. The protein localises to the secreted. Its subcellular location is the extracellular space. It is found in the extracellular matrix. The protein resides in the basement membrane. The catalysed reaction is [heparosan-N-sulfate](n) = [heparan-N-sulfate](n). Its pathway is glycan metabolism; heparan sulfate biosynthesis. It participates in glycan metabolism; heparin biosynthesis. In terms of biological role, converts D-glucuronic acid residues adjacent to N-sulfate sugar residues to L-iduronic acids. Plays a role in the early migration of AQR and PQR neurons, which descend from the Q neuroblasts. The chain is D-glucuronyl C5-epimerase (hse-5) from Caenorhabditis elegans.